The primary structure comprises 213 residues: Thymidylate kinase (213 aa).

Residue 9–16 (GLEGAGKS) coordinates ATP.

Belongs to the thymidylate kinase family.

It catalyses the reaction dTMP + ATP = dTDP + ADP. Phosphorylation of dTMP to form dTDP in both de novo and salvage pathways of dTTP synthesis. The sequence is that of Thymidylate kinase from Aeromonas hydrophila subsp. hydrophila (strain ATCC 7966 / DSM 30187 / BCRC 13018 / CCUG 14551 / JCM 1027 / KCTC 2358 / NCIMB 9240 / NCTC 8049).